Consider the following 240-residue polypeptide: Large ribosomal subunit protein uL2 (240 aa).

Over residues 1 to 20 (MGKRLQSQNRGKGTPRYTSP) the composition is skewed to polar residues. 2 disordered regions span residues 1 to 33 (MGKRLQSQNRGKGTPRYTSPTHKRKGAVKYRKF) and 204 to 240 (PFGGGNTQHAGKPTTISRHTSPGRKVGHIAARRTGKR). Composition is skewed to basic residues over residues 21–30 (THKRKGAVKY) and 224–240 (SPGRKVGHIAARRTGKR).

Belongs to the universal ribosomal protein uL2 family. In terms of assembly, part of the 50S ribosomal subunit. Forms a bridge to the 30S subunit in the 70S ribosome.

Functionally, one of the primary rRNA binding proteins. Required for association of the 30S and 50S subunits to form the 70S ribosome, for tRNA binding and peptide bond formation. It has been suggested to have peptidyltransferase activity; this is somewhat controversial. Makes several contacts with the 16S rRNA in the 70S ribosome. In Methanococcus aeolicus (strain ATCC BAA-1280 / DSM 17508 / OCM 812 / Nankai-3), this protein is Large ribosomal subunit protein uL2.